Reading from the N-terminus, the 234-residue chain is LexA repressor (234 aa).

A DNA-binding region (H-T-H motif) is located at residues 26 to 46; it reads FDEMKEALDLASKSGIHRLIT. Positions 73 to 107 are disordered; it reads ATAAAPPKGRGAFRPQVFEGGGAPPPAASPAAAAN. Catalysis depends on for autocatalytic cleavage activity residues serine 155 and lysine 192.

The protein belongs to the peptidase S24 family. As to quaternary structure, homodimer.

It catalyses the reaction Hydrolysis of Ala-|-Gly bond in repressor LexA.. Represses a number of genes involved in the response to DNA damage (SOS response), including recA and lexA. In the presence of single-stranded DNA, RecA interacts with LexA causing an autocatalytic cleavage which disrupts the DNA-binding part of LexA, leading to derepression of the SOS regulon and eventually DNA repair. The sequence is that of LexA repressor from Caulobacter vibrioides (strain ATCC 19089 / CIP 103742 / CB 15) (Caulobacter crescentus).